Here is a 215-residue protein sequence, read N- to C-terminus: 3-isopropylmalate dehydratase small subunit (215 aa).

This sequence belongs to the LeuD family. LeuD type 1 subfamily. As to quaternary structure, heterodimer of LeuC and LeuD.

It catalyses the reaction (2R,3S)-3-isopropylmalate = (2S)-2-isopropylmalate. The protein operates within amino-acid biosynthesis; L-leucine biosynthesis; L-leucine from 3-methyl-2-oxobutanoate: step 2/4. In terms of biological role, catalyzes the isomerization between 2-isopropylmalate and 3-isopropylmalate, via the formation of 2-isopropylmaleate. This Ectopseudomonas mendocina (strain ymp) (Pseudomonas mendocina) protein is 3-isopropylmalate dehydratase small subunit.